Reading from the N-terminus, the 221-residue chain is Ribosomal RNA large subunit methyltransferase E (221 aa).

S-adenosyl-L-methionine-binding residues include glycine 60, tryptophan 62, aspartate 89, aspartate 105, and aspartate 134. Catalysis depends on lysine 174, which acts as the Proton acceptor.

It belongs to the class I-like SAM-binding methyltransferase superfamily. RNA methyltransferase RlmE family.

The protein localises to the cytoplasm. It carries out the reaction uridine(2552) in 23S rRNA + S-adenosyl-L-methionine = 2'-O-methyluridine(2552) in 23S rRNA + S-adenosyl-L-homocysteine + H(+). Specifically methylates the uridine in position 2552 of 23S rRNA at the 2'-O position of the ribose in the fully assembled 50S ribosomal subunit. In Cupriavidus taiwanensis (strain DSM 17343 / BCRC 17206 / CCUG 44338 / CIP 107171 / LMG 19424 / R1) (Ralstonia taiwanensis (strain LMG 19424)), this protein is Ribosomal RNA large subunit methyltransferase E.